Here is a 307-residue protein sequence, read N- to C-terminus: Methionyl-tRNA formyltransferase (307 aa).

110–113 (SLLP) contributes to the (6S)-5,6,7,8-tetrahydrofolate binding site.

The protein belongs to the Fmt family.

The enzyme catalyses L-methionyl-tRNA(fMet) + (6R)-10-formyltetrahydrofolate = N-formyl-L-methionyl-tRNA(fMet) + (6S)-5,6,7,8-tetrahydrofolate + H(+). Functionally, attaches a formyl group to the free amino group of methionyl-tRNA(fMet). The formyl group appears to play a dual role in the initiator identity of N-formylmethionyl-tRNA by promoting its recognition by IF2 and preventing the misappropriation of this tRNA by the elongation apparatus. This is Methionyl-tRNA formyltransferase from Rhodococcus erythropolis (strain PR4 / NBRC 100887).